We begin with the raw amino-acid sequence, 263 residues long: Sulfur carrier protein FdhD (263 aa).

Residue C107 is the Cysteine persulfide intermediate of the active site.

Belongs to the FdhD family.

Its subcellular location is the cytoplasm. Required for formate dehydrogenase (FDH) activity. Acts as a sulfur carrier protein that transfers sulfur from IscS to the molybdenum cofactor prior to its insertion into FDH. This chain is Sulfur carrier protein FdhD, found in Bacillus licheniformis (strain ATCC 14580 / DSM 13 / JCM 2505 / CCUG 7422 / NBRC 12200 / NCIMB 9375 / NCTC 10341 / NRRL NRS-1264 / Gibson 46).